We begin with the raw amino-acid sequence, 879 residues long: Autophagy-related protein 9 (879 aa).

Positions 1–56 are disordered; the sequence is MGKGEGYLDPTILSVASGSRNSGKGKERTRRKGGHKYHSLHVQDEEEEEPPESDAL. A compositionally biased stretch (basic residues) spans 27–39; the sequence is ERTRRKGGHKYHS. A helical membrane pass occupies residues 104–124; sequence VLNLLTTFFVIAFSTFLISCI. N-linked (GlcNAc...) asparagine glycosylation is found at N163 and N166. The chain crosses the membrane as a helical span at residues 180–200; that stretch reads LFLIILSAFFIFQVASFAMSV. An intramembrane segment occupies 385–405; sequence FIFMGILNAIFAPFIILYLLI. A run of 2 helical transmembrane segments spans residues 455–475 and 488–508; these read FVAFIAGSFAAVLLVASLIDP and TVLFYLGVFGSILAISRGMVP. Residues 555–575 lie within the membrane without spanning it; the sequence is IMIFFSELLSVILTPFILFFS. Disordered regions lie at residues 620-666 and 763-825; these read ETGL…DWRG and WAKS…EEER. The segment covering 632–657 has biased composition (low complexity); the sequence is GPAADGFAAGKPSRPTTRRTTSSSPS. Basic and acidic residues predominate over residues 798–817; that stretch reads EGDKGDDSIDGWSKRVKTDG.

Belongs to the ATG9 family. Homotrimer; forms a homotrimer with a central pore that forms a path between the two membrane leaflets. In terms of processing, phosphorylated by ATG1. ATG1 phosphorylation is required for preautophagosome elongation.

It is found in the preautophagosomal structure membrane. Its subcellular location is the cytoplasmic vesicle membrane. It localises to the golgi apparatus membrane. The protein resides in the endoplasmic reticulum membrane. The enzyme catalyses a 1,2-diacyl-sn-glycero-3-phosphocholine(in) = a 1,2-diacyl-sn-glycero-3-phosphocholine(out). It catalyses the reaction a 1,2-diacyl-sn-glycero-3-phospho-L-serine(in) = a 1,2-diacyl-sn-glycero-3-phospho-L-serine(out). The catalysed reaction is a 1,2-diacyl-sn-glycero-3-phosphoethanolamine(in) = a 1,2-diacyl-sn-glycero-3-phosphoethanolamine(out). It carries out the reaction a 1,2-diacyl-sn-glycero-3-phospho-(1D-myo-inositol-3-phosphate)(in) = a 1,2-diacyl-sn-glycero-3-phospho-(1D-myo-inositol-3-phosphate)(out). Phospholipid scramblase involved in autophagy and cytoplasm to vacuole transport (Cvt) vesicle formation. Cycles between the preautophagosomal structure/phagophore assembly site (PAS) and the cytoplasmic vesicle pool and supplies membrane for the growing autophagosome. Lipid scramblase activity plays a key role in preautophagosomal structure/phagophore assembly by distributing the phospholipids that arrive through ATG2 from the cytoplasmic to the luminal leaflet of the bilayer, thereby driving autophagosomal membrane expansion. Required for mitophagy. Also involved in endoplasmic reticulum-specific autophagic process and is essential for the survival of cells subjected to severe ER stress. Different machineries are required for anterograde trafficking to the PAS during either the Cvt pathway or bulk autophagy and for retrograde trafficking. In Cryptococcus neoformans var. neoformans serotype D (strain B-3501A) (Filobasidiella neoformans), this protein is Autophagy-related protein 9 (ATG9).